A 305-amino-acid chain; its full sequence is UDP-3-O-acyl-N-acetylglucosamine deacetylase (305 aa).

Zn(2+) contacts are provided by His79, His238, and Asp242. Catalysis depends on His265, which acts as the Proton donor.

It belongs to the LpxC family. It depends on Zn(2+) as a cofactor.

The catalysed reaction is a UDP-3-O-[(3R)-3-hydroxyacyl]-N-acetyl-alpha-D-glucosamine + H2O = a UDP-3-O-[(3R)-3-hydroxyacyl]-alpha-D-glucosamine + acetate. Its pathway is glycolipid biosynthesis; lipid IV(A) biosynthesis; lipid IV(A) from (3R)-3-hydroxytetradecanoyl-[acyl-carrier-protein] and UDP-N-acetyl-alpha-D-glucosamine: step 2/6. In terms of biological role, catalyzes the hydrolysis of UDP-3-O-myristoyl-N-acetylglucosamine to form UDP-3-O-myristoylglucosamine and acetate, the committed step in lipid A biosynthesis. The chain is UDP-3-O-acyl-N-acetylglucosamine deacetylase from Mannheimia succiniciproducens (strain KCTC 0769BP / MBEL55E).